The sequence spans 636 residues: Zinc finger protein 90 (636 aa).

The KRAB domain maps to 14 to 85 (VTFKDVAVNF…EKEIQRPFCP (72 aa)). 7 C2H2-type zinc fingers span residues 208–230 (YKCDKCRKSFIHRSSLNKHEKIH), 250–272 (HECADCGKTFLWRTQLTEHQRIH), 278–300 (FECNVCGKAFRHSSSLGQHENAH), 306–328 (YQCSLCGKAFQRSSSLVQHQRIH), 334–356 (YRCNLCGRSFRHSTSLTQHEVTH), 362–384 (FQCKECGKAFSRCSSLVQHERTH), and 390–412 (FECSICGRAFGQSPSLYKHMRIH). The interval 227-247 (EKIHKGDPYSNGTDQGAQSGR) is disordered. Lysine 444 participates in a covalent cross-link: Glycyl lysine isopeptide (Lys-Gly) (interchain with G-Cter in SUMO2). 6 consecutive C2H2-type zinc fingers follow at residues 446-468 (YHCNDCGKDFGHITDFSEHQRLH), 494-516 (YQCNVCGKAFKRSTSFIEHHRIH), 522-544 (YECNECGEAFSRLSSLTQHERTH), 550-572 (YECIDCGKAFSQSSSLIQHERTH), 578-600 (YECNECGRAFRKKTNLHDHQRTH), and 606-628 (YACKECGRNFSRSSALTKHHRVH).

It belongs to the krueppel C2H2-type zinc-finger protein family. In terms of assembly, interacts (via N- and C-termini) with REST (via zinc-finger DNA-binding domain); the interaction inhibits REST repressor activity. Brain, spleen, thymus, and testis. Expressed in heart.

It localises to the nucleus. Its function is as follows. Inhibits the transcriptional repressor activity of REST by inhibiting its binding to DNA, thereby derepressing transcription of REST target genes. The sequence is that of Zinc finger protein 90 (Zfp90) from Mus musculus (Mouse).